The primary structure comprises 201 residues: Recombination protein RecR (201 aa).

The C4-type zinc-finger motif lies at 60-75 (CSRCGNVDTVDPCTVC). The region spanning 83-178 (SVIIVVEDVS…KITRLAHGVP (96 aa)) is the Toprim domain.

It belongs to the RecR family.

May play a role in DNA repair. It seems to be involved in an RecBC-independent recombinational process of DNA repair. It may act with RecF and RecO. The protein is Recombination protein RecR of Rhizobium etli (strain CIAT 652).